Reading from the N-terminus, the 936-residue chain is UPF0746 protein DDB_G0280787 (936 aa).

Residues 1-19 (MISNKRKEIDTIDGHHEKD) show a composition bias toward basic and acidic residues. Positions 1–30 (MISNKRKEIDTIDGHHEKDNDDDDSDGIDN) are disordered. Residues 44–78 (SGSTNYRELQIIAKSLGLASNGKKQLVYNRIEGYF) enclose the SAP domain. A disordered region spans residues 91 to 110 (ETNQQEEKKEEEQQQPQPQE).

The protein belongs to the UPF0746 family.

This Dictyostelium discoideum (Social amoeba) protein is UPF0746 protein DDB_G0280787.